A 673-amino-acid chain; its full sequence is DNA ligase (673 aa).

NAD(+) is bound by residues aspartate 34 to aspartate 38, serine 83 to leucine 84, and glutamate 116. Catalysis depends on lysine 118, which acts as the N6-AMP-lysine intermediate. Positions 139, 176, 293, and 317 each coordinate NAD(+). Zn(2+)-binding residues include cysteine 411, cysteine 414, cysteine 429, and cysteine 435. The BRCT domain maps to asparagine 595 to serine 673.

Belongs to the NAD-dependent DNA ligase family. LigA subfamily. Requires Mg(2+) as cofactor. It depends on Mn(2+) as a cofactor.

The enzyme catalyses NAD(+) + (deoxyribonucleotide)n-3'-hydroxyl + 5'-phospho-(deoxyribonucleotide)m = (deoxyribonucleotide)n+m + AMP + beta-nicotinamide D-nucleotide.. DNA ligase that catalyzes the formation of phosphodiester linkages between 5'-phosphoryl and 3'-hydroxyl groups in double-stranded DNA using NAD as a coenzyme and as the energy source for the reaction. It is essential for DNA replication and repair of damaged DNA. The sequence is that of DNA ligase from Legionella pneumophila subsp. pneumophila (strain Philadelphia 1 / ATCC 33152 / DSM 7513).